Reading from the N-terminus, the 399-residue chain is DNA replication and repair protein RecF (399 aa).

30–37 (GSNGIGKT) is an ATP binding site.

The protein belongs to the RecF family.

The protein resides in the cytoplasm. In terms of biological role, the RecF protein is involved in DNA metabolism; it is required for DNA replication and normal SOS inducibility. RecF binds preferentially to single-stranded, linear DNA. It also seems to bind ATP. The chain is DNA replication and repair protein RecF from Paenarthrobacter aurescens (strain TC1).